The chain runs to 341 residues: HTH-type transcriptional repressor PurR (341 aa).

Positions 2 to 56 (ATIKDVAKHAGVSTTTVSHVINKTRFVAEDTKAAVWAAIKALNYSPSAVARSLKV) constitute an HTH lacI-type domain. Positions 4 to 23 (IKDVAKHAGVSTTTVSHVIN) form a DNA-binding region, H-T-H motif. The DNA-binding element occupies 48–56 (SAVARSLKV). Hypoxanthine is bound by residues tyrosine 73, arginine 190, threonine 192, phenylalanine 221, and aspartate 275.

As to quaternary structure, homodimer.

It functions in the pathway purine metabolism; purine nucleotide biosynthesis [regulation]. Its function is as follows. Is the main repressor of the genes involved in the de novo synthesis of purine nucleotides, regulating purB, purC, purEK, purF, purHD, purL, purMN and guaBA expression. PurR is allosterically activated to bind its cognate DNA by binding the purine corepressors, hypoxanthine or guanine, thereby effecting transcription repression. The protein is HTH-type transcriptional repressor PurR of Photorhabdus laumondii subsp. laumondii (strain DSM 15139 / CIP 105565 / TT01) (Photorhabdus luminescens subsp. laumondii).